A 57-amino-acid chain; its full sequence is Preprotein translocase subunit SecG (57 aa).

Residues 1 to 33 (MPSSKKKKENVPVMSMAGLIRYYEEEHEKYKVD) lie on the Cytoplasmic side of the membrane. The chain crosses the membrane as a helical span at residues 34-55 (PIYVIIASIVLVAVVVAVTKII). Topologically, residues 56 to 57 (PP) are extracellular.

This sequence belongs to the SEC61-beta family. Component of the protein translocase complex. Heterotrimer consisting of alpha (SecY), beta (SecG) and gamma (SecE) subunits. Can form oligomers of the heterotrimer.

It is found in the cell membrane. In terms of biological role, involved in protein export. The function of the beta subunit is unknown, but it may be involved in stabilization of the trimeric complex. The protein is Preprotein translocase subunit SecG of Metallosphaera sedula (strain ATCC 51363 / DSM 5348 / JCM 9185 / NBRC 15509 / TH2).